The primary structure comprises 605 residues: Protein ZRG17 (605 aa).

The Cytoplasmic portion of the chain corresponds to 1-225; it reads METPQMNAIQ…DLLSNLPWPK (225 aa). 2 positions are modified to phosphoserine: S16 and S131. Residues 118–178 form a disordered region; that stretch reads PAPKLVPPPP…PSSAASRTSF (61 aa). The span at 143 to 176 shows a compositional bias: polar residues; sequence SKRSSMTLDSPFNFTTSTLQPHQQTPPSSAASRT. The chain crosses the membrane as a helical span at residues 226–246; sequence AYIQLSIAALQIFACLITFQV. The Lumenal segment spans residues 247–254; that stretch reads GHLYSWSN. The chain crosses the membrane as a helical span at residues 255 to 275; sequence FITLSHFITYDIIGSLVIIFV. Over 276–287 the chain is Cytoplasmic; the sequence is ENLSQFQVWFTG. Residues 288-308 traverse the membrane as a helical segment; it reads TITFPFGLNRIDVLLSFALAV. S309 is a topological domain (lumenal). Residues 310-330 form a helical membrane-spanning segment; it reads LCFVGLDLLFHIIEEFIVLFV. Topologically, residues 331–363 are cytoplasmic; sequence ESGSSLTNNHDHDEINEQIPHSHIANANDSQNE. The chain crosses the membrane as a helical span at residues 364–384; the sequence is NITLWYSILMINLVLSTLSLY. Over 385-399 the chain is Lumenal; sequence KTFYANKYSNLKTKN. A helical transmembrane segment spans residues 400-420; that stretch reads PIITITYTAYLFIYPLLLDLL. The Cytoplasmic portion of the chain corresponds to 421–422; that stretch reads SS. The helical transmembrane segment at 423–443 threads the bilayer; it reads ISDYLATLVISSLILWHGLTI. At 444-545 the chain is on the lumenal side; it reads ARWTSTVLLM…ERLSEFKSRY (102 aa). The segment covering 473–482 has biased composition (polar residues); that stretch reads DTTAHTQQVE. Positions 473 to 497 are disordered; that stretch reads DTTAHTQQVESKAAKEKPSVRPRSM. S498 carries the post-translational modification Phosphoserine. The helical transmembrane segment at 546 to 566 threads the bilayer; sequence ILNYDDIVISKVNFTLYVVLI. Topologically, residues 567–605 are cytoplasmic; that stretch reads KITMKGGSDDDELMLRLAIDKCIQTSIPTCETTIDIDRI.

The protein localises to the endoplasmic reticulum membrane. The sequence is that of Protein ZRG17 (ZRG17) from Saccharomyces cerevisiae (strain ATCC 204508 / S288c) (Baker's yeast).